The following is a 446-amino-acid chain: UPF0597 protein DvMF_1488 (446 aa).

It belongs to the UPF0597 family.

This is UPF0597 protein DvMF_1488 from Nitratidesulfovibrio vulgaris (strain DSM 19637 / Miyazaki F) (Desulfovibrio vulgaris).